The chain runs to 462 residues: ATP synthase subunit beta (462 aa).

Residue 151 to 158 participates in ATP binding; it reads GGAGVGKT.

It belongs to the ATPase alpha/beta chains family. F-type ATPases have 2 components, CF(1) - the catalytic core - and CF(0) - the membrane proton channel. CF(1) has five subunits: alpha(3), beta(3), gamma(1), delta(1), epsilon(1). CF(0) has three main subunits: a(1), b(2) and c(9-12). The alpha and beta chains form an alternating ring which encloses part of the gamma chain. CF(1) is attached to CF(0) by a central stalk formed by the gamma and epsilon chains, while a peripheral stalk is formed by the delta and b chains.

Its subcellular location is the cell inner membrane. The catalysed reaction is ATP + H2O + 4 H(+)(in) = ADP + phosphate + 5 H(+)(out). Produces ATP from ADP in the presence of a proton gradient across the membrane. The catalytic sites are hosted primarily by the beta subunits. This Chlorobaculum parvum (strain DSM 263 / NCIMB 8327) (Chlorobium vibrioforme subsp. thiosulfatophilum) protein is ATP synthase subunit beta.